The sequence spans 414 residues: Protein IQ-DOMAIN 8 (414 aa).

The Nuclear localization signal 1 signature appears at 14-21 (NKKNITDD). Residues 40-61 (LISSSKGFKSRGGSYGTPSLGS) form a disordered region. 3 consecutive IQ domains span residues 92-120 (REWA…AVVR), 121-143 (IQAI…CMQA), and 144-169 (LVRV…EKPS). The tract at residues 119-132 (VRIQAIFRGRQVRK) is calmodulin-binding. 3 disordered regions span residues 156 to 190 (NRGP…SPGS), 218 to 244 (HQPR…SCKS), and 262 to 329 (GRLM…SGSF). Over residues 164–184 (ELEKPSDQQKDDPAKQAEKGW) the composition is skewed to basic and acidic residues. The segment covering 231-244 (KQGSVKKNNGSCKS) has biased composition (polar residues). A compositionally biased stretch (basic and acidic residues) spans 274 to 289 (NARKSESSVSEHDTVQ). The segment covering 307 to 328 (SSSATSSESSSTSQSPVPFSGS) has biased composition (low complexity). A Nuclear localization signal 2 motif is present at residues 336–343 (YRKPSYMS). A disordered region spans residues 347 to 398 (SIKAKQRRSGSSSSCSKTPFEKKQSMSYNGDVNVRRSAGSDPLNNQWTDLYP).

It belongs to the IQD family. In terms of assembly, binds to multiple calmodulin (CaM) in the presence of Ca(2+) and CaM-like proteins.

The protein localises to the nucleus. It localises to the cytoplasm. The protein resides in the cytoskeleton. It is found in the nucleus envelope. Its function is as follows. May be involved in cooperative interactions with calmodulins or calmodulin-like proteins. Recruits calmodulin proteins to microtubules, thus being a potential scaffold in cellular signaling and trafficking. May associate with nucleic acids and regulate gene expression at the transcriptional or post-transcriptional level. This chain is Protein IQ-DOMAIN 8, found in Arabidopsis thaliana (Mouse-ear cress).